The sequence spans 327 residues: GTPase Obg (327 aa).

In terms of domain architecture, Obg spans 1–159; it reads MQFIDQANII…WEVQLELKLL (159 aa). An OBG-type G domain is found at 160-327; sequence AEVGIIGLPN…SLLSEVWKRI (168 aa). ATP is bound by residues 166–173, 191–195, 213–216, 280–283, and 309–311; these read GLPNAGKS, FTTLI, DIPG, NKIE, and SSS. Residues Ser173 and Thr193 each contribute to the Mg(2+) site.

It belongs to the TRAFAC class OBG-HflX-like GTPase superfamily. OBG GTPase family. Monomer. Requires Mg(2+) as cofactor.

It localises to the cytoplasm. In terms of biological role, an essential GTPase which binds GTP, GDP and possibly (p)ppGpp with moderate affinity, with high nucleotide exchange rates and a fairly low GTP hydrolysis rate. Plays a role in control of the cell cycle, stress response, ribosome biogenesis and in those bacteria that undergo differentiation, in morphogenesis control. This chain is GTPase Obg, found in Prochlorococcus marinus (strain AS9601).